A 33-amino-acid chain; its full sequence is Cytochrome c oxidase subunit 5B liver, mitochondrial (33 aa).

It belongs to the cytochrome c oxidase subunit 5B family. In terms of assembly, component of the cytochrome c oxidase (complex IV, CIV), a multisubunit enzyme composed of 14 subunits. The complex is composed of a catalytic core of 3 subunits MT-CO1, MT-CO2 and MT-CO3, encoded in the mitochondrial DNA, and 11 supernumerary subunits COX4I, COX5A, COX5B, COX6A, COX6B, COX6C, COX7A, COX7B, COX7C, COX8 and NDUFA4, which are encoded in the nuclear genome. The complex exists as a monomer or a dimer and forms supercomplexes (SCs) in the inner mitochondrial membrane with NADH-ubiquinone oxidoreductase (complex I, CI) and ubiquinol-cytochrome c oxidoreductase (cytochrome b-c1 complex, complex III, CIII), resulting in different assemblies (supercomplex SCI(1)III(2)IV(1) and megacomplex MCI(2)III(2)IV(2)).

The protein localises to the mitochondrion inner membrane. It functions in the pathway energy metabolism; oxidative phosphorylation. Functionally, component of the cytochrome c oxidase, the last enzyme in the mitochondrial electron transport chain which drives oxidative phosphorylation. The respiratory chain contains 3 multisubunit complexes succinate dehydrogenase (complex II, CII), ubiquinol-cytochrome c oxidoreductase (cytochrome b-c1 complex, complex III, CIII) and cytochrome c oxidase (complex IV, CIV), that cooperate to transfer electrons derived from NADH and succinate to molecular oxygen, creating an electrochemical gradient over the inner membrane that drives transmembrane transport and the ATP synthase. Cytochrome c oxidase is the component of the respiratory chain that catalyzes the reduction of oxygen to water. Electrons originating from reduced cytochrome c in the intermembrane space (IMS) are transferred via the dinuclear copper A center (CU(A)) of subunit 2 and heme A of subunit 1 to the active site in subunit 1, a binuclear center (BNC) formed by heme A3 and copper B (CU(B)). The BNC reduces molecular oxygen to 2 water molecules using 4 electrons from cytochrome c in the IMS and 4 protons from the mitochondrial matrix. This Oncorhynchus mykiss (Rainbow trout) protein is Cytochrome c oxidase subunit 5B liver, mitochondrial.